A 691-amino-acid chain; its full sequence is DNA ligase (691 aa).

Residues Asp-41 to Asp-45, Ser-90 to Leu-91, and Glu-130 each bind NAD(+). Lys-132 acts as the N6-AMP-lysine intermediate in catalysis. Positions 153, 190, 307, and 331 each coordinate NAD(+). Cys-425, Cys-428, Cys-443, and Cys-449 together coordinate Zn(2+). One can recognise a BRCT domain in the interval Ala-610–Pro-691.

This sequence belongs to the NAD-dependent DNA ligase family. LigA subfamily. It depends on Mg(2+) as a cofactor. The cofactor is Mn(2+).

It catalyses the reaction NAD(+) + (deoxyribonucleotide)n-3'-hydroxyl + 5'-phospho-(deoxyribonucleotide)m = (deoxyribonucleotide)n+m + AMP + beta-nicotinamide D-nucleotide.. Its function is as follows. DNA ligase that catalyzes the formation of phosphodiester linkages between 5'-phosphoryl and 3'-hydroxyl groups in double-stranded DNA using NAD as a coenzyme and as the energy source for the reaction. It is essential for DNA replication and repair of damaged DNA. The sequence is that of DNA ligase from Burkholderia ambifaria (strain MC40-6).